The sequence spans 79 residues: Acyl carrier protein (79 aa).

Residues 2–77 enclose the Carrier domain; that stretch reads ADFEARVKEI…SAIDYVKTHV (76 aa). O-(pantetheine 4'-phosphoryl)serine is present on S37.

It belongs to the acyl carrier protein (ACP) family. Post-translationally, 4'-phosphopantetheine is transferred from CoA to a specific serine of apo-ACP by AcpS. This modification is essential for activity because fatty acids are bound in thioester linkage to the sulfhydryl of the prosthetic group.

The protein resides in the cytoplasm. Its pathway is lipid metabolism; fatty acid biosynthesis. Its function is as follows. Carrier of the growing fatty acid chain in fatty acid biosynthesis. In Endomicrobium trichonymphae, this protein is Acyl carrier protein.